A 201-amino-acid polypeptide reads, in one-letter code: Small ribosomal subunit protein uS4c (201 aa).

Positions 15-43 are disordered; that stretch reads LGALPGLTSKRPTPGSDLRNQSRSGKRSQ. Positions 89 to 149 constitute an S4 RNA-binding domain; that stretch reads MRLDNILFRL…DEQKSRALIQ (61 aa).

This sequence belongs to the universal ribosomal protein uS4 family. Part of the 30S ribosomal subunit. Contacts protein S5. The interaction surface between S4 and S5 is involved in control of translational fidelity.

Its subcellular location is the plastid. It localises to the chloroplast. One of the primary rRNA binding proteins, it binds directly to 16S rRNA where it nucleates assembly of the body of the 30S subunit. Functionally, with S5 and S12 plays an important role in translational accuracy. The chain is Small ribosomal subunit protein uS4c (rps4) from Nandina domestica (Heavenly bamboo).